The sequence spans 454 residues: Bifunctional protein GlmU (454 aa).

A pyrophosphorylase region spans residues 1–226 (MSLNVVILAA…AIEVEGANNR (226 aa)). Residues 8–11 (LAAG), lysine 22, glutamine 73, 78–79 (GT), 100–102 (YGD), glycine 137, glutamate 151, asparagine 166, and asparagine 224 each bind UDP-N-acetyl-alpha-D-glucosamine. Aspartate 102 is a binding site for Mg(2+). Asparagine 224 contributes to the Mg(2+) binding site. The interval 227–247 (VQLAQLERAYQARAAEKMMLE) is linker. The N-acetyltransferase stretch occupies residues 248 to 454 (GANLRDPARI…GWQRPIKIKK (207 aa)). Residues arginine 330 and lysine 348 each contribute to the UDP-N-acetyl-alpha-D-glucosamine site. Residue histidine 360 is the Proton acceptor of the active site. Tyrosine 363 and asparagine 374 together coordinate UDP-N-acetyl-alpha-D-glucosamine. Acetyl-CoA contacts are provided by residues alanine 377, 383–384 (NY), serine 402, alanine 420, and arginine 437.

It in the N-terminal section; belongs to the N-acetylglucosamine-1-phosphate uridyltransferase family. In the C-terminal section; belongs to the transferase hexapeptide repeat family. Homotrimer. It depends on Mg(2+) as a cofactor.

It is found in the cytoplasm. The enzyme catalyses alpha-D-glucosamine 1-phosphate + acetyl-CoA = N-acetyl-alpha-D-glucosamine 1-phosphate + CoA + H(+). It catalyses the reaction N-acetyl-alpha-D-glucosamine 1-phosphate + UTP + H(+) = UDP-N-acetyl-alpha-D-glucosamine + diphosphate. It functions in the pathway nucleotide-sugar biosynthesis; UDP-N-acetyl-alpha-D-glucosamine biosynthesis; N-acetyl-alpha-D-glucosamine 1-phosphate from alpha-D-glucosamine 6-phosphate (route II): step 2/2. Its pathway is nucleotide-sugar biosynthesis; UDP-N-acetyl-alpha-D-glucosamine biosynthesis; UDP-N-acetyl-alpha-D-glucosamine from N-acetyl-alpha-D-glucosamine 1-phosphate: step 1/1. It participates in bacterial outer membrane biogenesis; LPS lipid A biosynthesis. In terms of biological role, catalyzes the last two sequential reactions in the de novo biosynthetic pathway for UDP-N-acetylglucosamine (UDP-GlcNAc). The C-terminal domain catalyzes the transfer of acetyl group from acetyl coenzyme A to glucosamine-1-phosphate (GlcN-1-P) to produce N-acetylglucosamine-1-phosphate (GlcNAc-1-P), which is converted into UDP-GlcNAc by the transfer of uridine 5-monophosphate (from uridine 5-triphosphate), a reaction catalyzed by the N-terminal domain. This is Bifunctional protein GlmU from Shewanella frigidimarina (strain NCIMB 400).